Here is a 613-residue protein sequence, read N- to C-terminus: RNA polymerase sigma factor RpoD (613 aa).

Residues 2-80 are sigma-70 factor domain-1; it reads EQNPQSQLKL…TADEDAAEAA (79 aa). The segment at 176–213 is disordered; that stretch reads PTATHVGSELSQEDLDDDEDEDEEDGDDDSADDDNSID. The span at 186–212 shows a compositional bias: acidic residues; that stretch reads SQEDLDDDEDEDEEDGDDDSADDDNSI. The sigma-70 factor domain-2 stretch occupies residues 379-449; it reads MVEANLRLVI…TRSIADQART (71 aa). Positions 403 to 406 match the Interaction with polymerase core subunit RpoC motif; that stretch reads DLIQ. The sigma-70 factor domain-3 stretch occupies residues 458-534; that stretch reads ETINKLNRIS…DTTLELPLDS (77 aa). The interval 547 to 600 is sigma-70 factor domain-4; it reads VLAGLTAREAKVLRMRFGIDMNTDYTLEEVGKQFDVTRERIRQIEAKALRKLRH. The H-T-H motif DNA-binding region spans 573 to 592; that stretch reads LEEVGKQFDVTRERIRQIEA. The tract at residues 584–599 is interaction with anti-sigma factors; it reads RERIRQIEAKALRKLR.

This sequence belongs to the sigma-70 factor family. RpoD/SigA subfamily. As to quaternary structure, interacts transiently with the RNA polymerase catalytic core formed by RpoA, RpoB, RpoC and RpoZ (2 alpha, 1 beta, 1 beta' and 1 omega subunit) to form the RNA polymerase holoenzyme that can initiate transcription. Identified in a complex containing RpoD, the RNA polymerase subunits RpoA, RpoB and RpoZ, CRP and DNA. Interacts with Rsd; this prevents interaction with the RNA polymerase catalytic core and with promoter DNA, and as a consequence, promotes transcription from promoters that require alternative sigma factors. Interacts with phage T4 AsiA; this interferes with binding to DNA and to the RNA polymerase. (Microbial infection) Interacts with Escherichia phage lambda antitermination protein Q.

Its subcellular location is the cytoplasm. In terms of biological role, sigma factors are initiation factors that promote the attachment of RNA polymerase to specific initiation sites and are then released. This sigma factor is the primary sigma factor during exponential growth. Preferentially transcribes genes associated with fast growth, such as ribosomal operons, other protein-synthesis related genes, rRNA- and tRNA-encoding genes and prfB. This chain is RNA polymerase sigma factor RpoD, found in Escherichia coli (strain K12).